The following is a 113-amino-acid chain: Large ribosomal subunit protein bL19 (113 aa).

It belongs to the bacterial ribosomal protein bL19 family.

In terms of biological role, this protein is located at the 30S-50S ribosomal subunit interface and may play a role in the structure and function of the aminoacyl-tRNA binding site. This is Large ribosomal subunit protein bL19 from Mycobacterium avium (strain 104).